The chain runs to 360 residues: 3-isopropylmalate dehydrogenase (360 aa).

76 to 89 (GPKWDTIERDIRPE) is a binding site for NAD(+). Residues Arg-96, Arg-106, Arg-134, and Asp-224 each coordinate substrate. Residues Asp-224, Asp-248, and Asp-252 each coordinate Mg(2+). 282–294 (GSAPDIAGKGIAN) is a binding site for NAD(+).

The protein belongs to the isocitrate and isopropylmalate dehydrogenases family. LeuB type 1 subfamily. In terms of assembly, homodimer. Mg(2+) serves as cofactor. Requires Mn(2+) as cofactor.

It is found in the cytoplasm. It carries out the reaction (2R,3S)-3-isopropylmalate + NAD(+) = 4-methyl-2-oxopentanoate + CO2 + NADH. Its pathway is amino-acid biosynthesis; L-leucine biosynthesis; L-leucine from 3-methyl-2-oxobutanoate: step 3/4. Functionally, catalyzes the oxidation of 3-carboxy-2-hydroxy-4-methylpentanoate (3-isopropylmalate) to 3-carboxy-4-methyl-2-oxopentanoate. The product decarboxylates to 4-methyl-2 oxopentanoate. The sequence is that of 3-isopropylmalate dehydrogenase from Pseudomonas savastanoi pv. phaseolicola (strain 1448A / Race 6) (Pseudomonas syringae pv. phaseolicola (strain 1448A / Race 6)).